Here is a 160-residue protein sequence, read N- to C-terminus: Lymphocyte antigen 96 (160 aa).

The first 18 residues, 1-18 (MLPFLFFSTLFSSIFTEA), serve as a signal peptide directing secretion. Cystine bridges form between Cys-25-Cys-51, Cys-37-Cys-148, and Cys-95-Cys-105. N-linked (GlcNAc...) asparagine glycosylation occurs at Asn-26. Asn-114 carries an N-linked (GlcNAc...) asparagine glycan. An interaction with lipopolysaccharide region spans residues 119-123 (FSFKG).

In terms of assembly, heterogeneous homomer formed from homodimers; disulfide-linked. Belongs to the lipopolysaccharide (LPS) receptor, a multi-protein complex containing at least CD14, LY96 and TLR4. Binds to the extracellular domains of TLR2 and TLR4. Ligand binding induces interaction with TLR4 and oligomerization of the complex. In terms of processing, N-glycosylated; high-mannose.

Its subcellular location is the secreted. It localises to the extracellular space. Functionally, binds bacterial lipopolysaccharide (LPS). Cooperates with TLR4 in the innate immune response to bacterial lipopolysaccharide (LPS), and with TLR2 in the response to cell wall components from Gram-positive and Gram-negative bacteria. Enhances TLR4-dependent activation of NF-kappa-B. Cells expressing both LY96 and TLR4, but not TLR4 alone, respond to LPS. This chain is Lymphocyte antigen 96 (LY96), found in Homo sapiens (Human).